A 529-amino-acid polypeptide reads, in one-letter code: 1,4-beta-D-glucan cellobiohydrolase xynA (529 aa).

An N-terminal signal peptide occupies residues 1–25; the sequence is MSALNSFNMYKSALILGSLLATAGA. Residues 26–456 are catalytic; the sequence is QQIGTYTAET…SDIKVGPFNS (431 aa). Asn70 and Asn219 each carry an N-linked (GlcNAc...) asparagine glycan. The Nucleophile role is filled by Glu234. Glu239 serves as the catalytic Proton donor. The N-linked (GlcNAc...) asparagine glycan is linked to Asn413. Residues 413-438 form a disordered region; sequence NETGTPGAARGSCPTTSGNPKTVESQ. Residues 425–438 show a composition bias toward polar residues; sequence CPTTSGNPKTVESQ. N-linked (GlcNAc...) asparagine glycosylation is present at Asn455. The segment at 457–493 is thr-rich linker; it reads TFSGGTSTGGSTTTTASGTTSTKASTTSTSSTSTGTG. Residues 460 to 491 are disordered; it reads GGTSTGGSTTTTASGTTSTKASTTSTSSTSTG. One can recognise a CBM1 domain in the interval 493–529; it reads GVAAHWGQCGGQGWTGPTTCASGTTCTVVNPYYSQCL. Disulfide bonds link Cys501–Cys518 and Cys512–Cys528.

It belongs to the glycosyl hydrolase 7 (cellulase C) family.

Its subcellular location is the secreted. It carries out the reaction Hydrolysis of (1-&gt;4)-beta-D-glucosidic linkages in cellulose and cellotetraose, releasing cellobiose from the non-reducing ends of the chains.. With respect to regulation, cellobiose inhibits xynA at high concentrations. The biological conversion of cellulose to glucose generally requires three types of hydrolytic enzymes: (1) Endoglucanases which cut internal beta-1,4-glucosidic bonds; (2) Exocellobiohydrolases that cut the disaccharide cellobiose from the non-reducing end of the cellulose polymer chain; (3) Beta-1,4-glucosidases which hydrolyze the cellobiose and other short cello-oligosaccharides to glucose. The sequence is that of 1,4-beta-D-glucan cellobiohydrolase xynA (xynA) from Talaromyces funiculosus (Fruitlet core rot fungus).